The following is a 213-amino-acid chain: A-type ATP synthase subunit D (213 aa).

It belongs to the V-ATPase D subunit family. Has multiple subunits with at least A(3), B(3), C, D, E, F, H, I and proteolipid K(x).

The protein resides in the cell membrane. Functionally, component of the A-type ATP synthase that produces ATP from ADP in the presence of a proton gradient across the membrane. The sequence is that of A-type ATP synthase subunit D from Saccharolobus islandicus (strain L.S.2.15 / Lassen #1) (Sulfolobus islandicus).